Reading from the N-terminus, the 538-residue chain is Adenine deaminase (538 aa).

This sequence belongs to the metallo-dependent hydrolases superfamily. Adenine deaminase family. Mn(2+) serves as cofactor.

It catalyses the reaction adenine + H2O + H(+) = hypoxanthine + NH4(+). This is Adenine deaminase from Methanothermobacter thermautotrophicus (strain ATCC 29096 / DSM 1053 / JCM 10044 / NBRC 100330 / Delta H) (Methanobacterium thermoautotrophicum).